Here is a 144-residue protein sequence, read N- to C-terminus: AP-4 complex subunit sigma-1 (144 aa).

Belongs to the adaptor complexes small subunit family. Adaptor protein complex 4 (AP-4) is a heterotetramer composed of two large adaptins (epsilon-type subunit AP4E1 and beta-type subunit AP4B1), a medium adaptin (mu-type subunit AP4M1) and a small adaptin (sigma-type AP4S1). Widely expressed.

The protein resides in the golgi apparatus. It localises to the trans-Golgi network membrane. Functionally, component of the adaptor protein complex 4 (AP-4). Adaptor protein complexes are vesicle coat components involved both in vesicle formation and cargo selection. They control the vesicular transport of proteins in different trafficking pathways. AP-4 forms a non clathrin-associated coat on vesicles departing the trans-Golgi network (TGN) and may be involved in the targeting of proteins from the trans-Golgi network (TGN) to the endosomal-lysosomal system. It is also involved in protein sorting to the basolateral membrane in epithelial cells and the proper asymmetric localization of somatodendritic proteins in neurons. AP-4 is involved in the recognition and binding of tyrosine-based sorting signals found in the cytoplasmic part of cargos, but may also recognize other types of sorting signal. The polypeptide is AP-4 complex subunit sigma-1 (Homo sapiens (Human)).